A 416-amino-acid chain; its full sequence is MVRPRRAPYRSGAGGPLGGRGRPPRPLVVRAVRSRSWPASPRGPQPPRIRARSAPPMEGARVFGALGPIGPSSPGLTLGGLAVSEHRLSNKLLAWSGVLEWQEKRRPYSDSTAKLKRTLPCQAYVNQGENLETDQWPQKLIMQLIPQQLLTTLGPLFRNSQLAQFHFTNRDCDSLKGLCRIMGNGFAGCMLFPHISPCEVRVLMLLYSSKKKIFMGLIPYDQSGFVSAIRQVITTRKQAVGPGGVNSGPVQIVNNKFLAWSGVMEWQEPRPEPNSRSKRWLPSHVYVNQGEILRTEQWPRKLYMQLIPQQLLTTLVPLFRNSRLVQFHFTKDLETLKSLCRIMDNGFAGCVHFSYKASCEIRVLMLLYSSEKKIFIGLIPHDQGNFVNGIRRVIANQQQVLQRNLEQEQQQRGMGG.

Residues 1 to 53 (MVRPRRAPYRSGAGGPLGGRGRPPRPLVVRAVRSRSWPASPRGPQPPRIRARS) form a disordered region. Residues 12–21 (GAGGPLGGRG) show a composition bias toward gly residues. The span at 27-36 (LVVRAVRSRS) shows a compositional bias: low complexity. Phosphoserine is present on Ser53. Residues 184-416 (NGFAGCMLFP…QEQQQRGMGG (233 aa)) form an interaction with FLOT1 region.

The protein belongs to the Mediator complex subunit 25 family. PTOV1 subfamily. As to quaternary structure, may interact with CREBBP. Interacts with FLOT1. Post-translationally, ubiquitinated by the CRL2(KLHDC2) complex, which recognizes the diglycine (Gly-Gly) at the C-terminus, leading to its degradation. Ubiquitinated by the CRL2(APPBP2) complex, which recognizes the Arg-Xaa-Xaa-Gly sequence at the C-terminus, leading to its degradation. Expressed in brain, heart, kidney, liver, placenta, skeletal muscle and small intestine.

Its subcellular location is the cytoplasm. It is found in the nucleus. The protein resides in the cell membrane. The protein localises to the perinuclear region. Its function is as follows. May activate transcription. Required for nuclear translocation of FLOT1. Promotes cell proliferation. The chain is Prostate tumor-overexpressed gene 1 protein (PTOV1) from Homo sapiens (Human).